We begin with the raw amino-acid sequence, 312 residues long: tRNA pseudouridine synthase B (312 aa).

The Nucleophile role is filled by D49.

The protein belongs to the pseudouridine synthase TruB family. Type 1 subfamily.

It catalyses the reaction uridine(55) in tRNA = pseudouridine(55) in tRNA. Responsible for synthesis of pseudouridine from uracil-55 in the psi GC loop of transfer RNAs. The protein is tRNA pseudouridine synthase B of Chelativorans sp. (strain BNC1).